A 542-amino-acid polypeptide reads, in one-letter code: Chaperonin GroEL 1 (542 aa).

Residues 30-33 (TLGP), Lys51, 87-91 (DGTTT), Gly415, 480-482 (NAA), and Asp496 each bind ATP.

This sequence belongs to the chaperonin (HSP60) family. As to quaternary structure, forms a cylinder of 14 subunits composed of two heptameric rings stacked back-to-back. Interacts with the co-chaperonin GroES.

It is found in the cytoplasm. It catalyses the reaction ATP + H2O + a folded polypeptide = ADP + phosphate + an unfolded polypeptide.. Its function is as follows. Together with its co-chaperonin GroES, plays an essential role in assisting protein folding. The GroEL-GroES system forms a nano-cage that allows encapsulation of the non-native substrate proteins and provides a physical environment optimized to promote and accelerate protein folding. This Nitrobacter winogradskyi (strain ATCC 25391 / DSM 10237 / CIP 104748 / NCIMB 11846 / Nb-255) protein is Chaperonin GroEL 1.